The chain runs to 117 residues: Large ribosomal subunit protein uL18 (117 aa).

The protein belongs to the universal ribosomal protein uL18 family. In terms of assembly, part of the 50S ribosomal subunit; part of the 5S rRNA/L5/L18/L25 subcomplex. Contacts the 5S and 23S rRNAs.

This is one of the proteins that bind and probably mediate the attachment of the 5S RNA into the large ribosomal subunit, where it forms part of the central protuberance. The protein is Large ribosomal subunit protein uL18 of Azoarcus sp. (strain BH72).